Consider the following 105-residue polypeptide: Met repressor (105 aa).

This sequence belongs to the MetJ family. Homodimer.

It localises to the cytoplasm. This regulatory protein, when combined with SAM (S-adenosylmethionine) represses the expression of the methionine regulon and of enzymes involved in SAM synthesis. This chain is Met repressor, found in Proteus mirabilis (strain HI4320).